Reading from the N-terminus, the 388-residue chain is MAGCCSVLGSFLFEYDTPRIVLIRSRKVGLMNRVVQLLILAYVIGWVFVWEKGYQETDSVVSSVTTKAKGVAVTNTSQLGFRIWDVADYVVPAQEENSLFIMTNMIVTVNQTQGTCPEIPDKTSICDSDANCTLGSSDTHSSGIGTGRCVPFNASVKTCEVAAWCPVENDAGVPTPAFLKAAENFTLLVKNNIWYPKFNFSKRNILPNITTSYLKSCIYNARTDPFCPIFRLGQIVADAGHSFQEMAVEGGIMGIQIKWDCNLDRAASHCLPRYSFRRLDTRDLEHNVSPGYNFRFAKYYRDLAGNEQRTLTKAYGIRFDIIVFGKAGKFDIIPTMINVGSGLALLGVATVLCDVIVLYCMKKRYYYRDKKYKYVEDYEQGLSGEMNQ.

The Cytoplasmic portion of the chain corresponds to 1–33; that stretch reads MAGCCSVLGSFLFEYDTPRIVLIRSRKVGLMNR. Residues 34-54 traverse the membrane as a helical segment; sequence VVQLLILAYVIGWVFVWEKGY. Over 55–338 the chain is Extracellular; it reads QETDSVVSSV…KFDIIPTMIN (284 aa). The ATP site is built by Lys-67 and Lys-69. CTP is bound by residues Lys-67 and Lys-69. N-linked (GlcNAc...) asparagine glycosylation is found at Asn-75, Asn-110, Asn-131, Asn-153, and Asn-184. 3 disulfides stabilise this stretch: Cys-116–Cys-165, Cys-126–Cys-149, and Cys-132–Cys-159. ATP contacts are provided by Thr-186 and Leu-188. Thr-186 is a binding site for CTP. Residues Asn-199 and Asn-208 are each glycosylated (N-linked (GlcNAc...) asparagine). Cystine bridges form between Cys-217-Cys-227 and Cys-261-Cys-270. The ATP site is built by Asn-293, Arg-295, and Lys-313. 3 residues coordinate CTP: Asn-293, Arg-295, and Lys-313. The helical transmembrane segment at 339–359 threads the bilayer; sequence VGSGLALLGVATVLCDVIVLY. Residues 360 to 388 are Cytoplasmic-facing; it reads CMKKRYYYRDKKYKYVEDYEQGLSGEMNQ.

Belongs to the P2X receptor family. In terms of assembly, functional P2RXs are organized as homomeric and heteromeric trimers. Functional P2XRs are organized as homomeric and heteromeric trimers. Forms heterotrimer with P2RX1. Interacts with P2RX7 (via C-terminus); this interaction is functional only in the presence of ATP. Forms heterotrimer with P2RX4; functional differences between homomeric P2RX4 and P2RX4/6 heterotrimer are minor. Interacts with AP1M2.

It is found in the cell membrane. Its subcellular location is the lysosome membrane. The enzyme catalyses K(+)(in) = K(+)(out). It catalyses the reaction Na(+)(in) = Na(+)(out). The catalysed reaction is Ca(2+)(in) = Ca(2+)(out). Its activity is regulated as follows. Activated by ATP. pH-dependent and inhibited by acidic pH. ATP-gated nonselective transmembrane cation channel permeable to potassium, sodium and calcium. CTP, but not GTP or UTP, functions as a weak affinity agonist for P2RX4. Activated by extracellularly released ATP, it plays multiple role in immunity and central nervous system physiology. Plays a key role in initial steps of T-cell activation and Ca(2+) microdomain formation. Also participates in basal T-cell activity without TCR/CD3 stimulation. Promotes the differentiation and activation of Th17 cells via expression of retinoic acid-related orphan receptor C/RORC. Upon activation, drives microglia motility via the PI3K/Akt pathway. Could also function as an ATP-gated cation channel of lysosomal membranes. This chain is P2X purinoceptor 4 (P2rx4), found in Mus musculus (Mouse).